Reading from the N-terminus, the 234-residue chain is 2-amino-5-formylamino-6-ribosylaminopyrimidin-4(3H)-one 5'-monophosphate deformylase (234 aa).

Residues Glu30, His32, Asp41, and His111 each contribute to the Fe cation site.

Belongs to the creatininase superfamily. FAPy deformylase family. In terms of assembly, homodimer. Fe(2+) is required as a cofactor. The cofactor is Zn(2+).

The catalysed reaction is 2-amino-5-formylamino-6-(5-phospho-D-ribosylamino)pyrimidin-4(3H)-one + H2O = 2,5-diamino-6-(1-D-ribosylamino)pyrimidin-4(3H)-one 5'-phosphate + formate + H(+). It functions in the pathway cofactor biosynthesis; coenzyme F420 biosynthesis. It participates in cofactor biosynthesis; riboflavin biosynthesis. Its function is as follows. Catalyzes the hydrolysis of the formamide of 2-amino-5-formylamino-6-ribosylamino-4(3H)-pyrimidinone 5'-monophosphate (FAPy) to form 2,5-diamino-6-ribosylamino-4(3H)-pyrimidinone 5'-phosphate (APy). This chain is 2-amino-5-formylamino-6-ribosylaminopyrimidin-4(3H)-one 5'-monophosphate deformylase, found in Methanothermobacter thermautotrophicus (strain ATCC 29096 / DSM 1053 / JCM 10044 / NBRC 100330 / Delta H) (Methanobacterium thermoautotrophicum).